The following is a 112-amino-acid chain: Nucleoid-associated protein lpg2755 (112 aa).

Belongs to the YbaB/EbfC family. As to quaternary structure, homodimer.

It localises to the cytoplasm. Its subcellular location is the nucleoid. In terms of biological role, binds to DNA and alters its conformation. May be involved in regulation of gene expression, nucleoid organization and DNA protection. This Legionella pneumophila subsp. pneumophila (strain Philadelphia 1 / ATCC 33152 / DSM 7513) protein is Nucleoid-associated protein lpg2755.